A 158-amino-acid chain; its full sequence is C-type lectin BiL (158 aa).

The signal sequence occupies residues 1-23 (MGRFIFVSFGLLVVFLSLSGAKG). 4 cysteine pairs are disulfide-bonded: cysteine 26–cysteine 37, cysteine 54–cysteine 154, cysteine 61–cysteine 156, and cysteine 129–cysteine 146. One can recognise a C-type lectin domain in the interval 33-155 (MNGLCYKIFD…CESKNAFLCQ (123 aa)). Ca(2+) is bound by residues glutamine 119, aspartate 121, glutamate 127, asparagine 142, and aspartate 143. Residues 119-121 (QPD) carry the Galactose-binding motif.

Homodimer; disulfide-linked. As to expression, expressed by the venom gland.

It localises to the secreted. Its function is as follows. Lectin with a hemagglutinating activity that is inhibited by galactose, lactose and EDTA. Is calcium-dependent. Shows effects on the renal function of isolated perfused rat kidneys by increasing both perfusion pressure (PP) and renal vascular resistance (RVR). In addition, the urinary flow and glomerular filtration rate (GFR) decreases significantly. The changes observed may reflect direct injury to the glomerular and tubular renal cells, and the rise in permeability in the glomerular endothelial cells, may be the effect of interactions of C-type lectin with endothelial cells or due to release of other mediators by mesangial, tubular and endothelial cells. The chain is C-type lectin BiL from Bothrops insularis (Golden lancehead).